The following is a 422-amino-acid chain: Serine protease inhibitor A3A (422 aa).

The signal sequence occupies residues 1-17 (MAFIAALGLLMVGICPA). N-linked (GlcNAc...) asparagine glycosylation is found at Asn-218, Asn-230, and Asn-271. Residues 369–394 (HTEADVITIARYNFQSAKIKAKIVKV) are RCL.

This sequence belongs to the serpin family.

It localises to the secreted. The protein is Serine protease inhibitor A3A (Serpina3a) of Mus musculus (Mouse).